A 760-amino-acid chain; its full sequence is Penicillin-binding protein 1B (760 aa).

The Cytoplasmic portion of the chain corresponds to 1 to 8 (MFFNFKKY). A helical; Signal-anchor for type II membrane protein transmembrane segment spans residues 9 to 29 (FLIKVFFFVLILTLCYGLYLY). At 30 to 760 (VKINRFINGK…NFLFWLKNLF (731 aa)) the chain is on the extracellular side. The tract at residues 136 to 308 (FRLEPKLIAM…SLYSPWTNPN (173 aa)) is transglycosylase. Glu-174 serves as the catalytic Proton donor; for transglycosylase activity. A transpeptidase region spans residues 392–684 (EQAVKIEIPI…SSGAMQIYKR (293 aa)). The Acyl-ester intermediate; for transpeptidase activity role is filled by Ser-451.

The protein in the N-terminal section; belongs to the glycosyltransferase 51 family. In the C-terminal section; belongs to the transpeptidase family.

It localises to the cell membrane. It catalyses the reaction [GlcNAc-(1-&gt;4)-Mur2Ac(oyl-L-Ala-gamma-D-Glu-L-Lys-D-Ala-D-Ala)](n)-di-trans,octa-cis-undecaprenyl diphosphate + beta-D-GlcNAc-(1-&gt;4)-Mur2Ac(oyl-L-Ala-gamma-D-Glu-L-Lys-D-Ala-D-Ala)-di-trans,octa-cis-undecaprenyl diphosphate = [GlcNAc-(1-&gt;4)-Mur2Ac(oyl-L-Ala-gamma-D-Glu-L-Lys-D-Ala-D-Ala)](n+1)-di-trans,octa-cis-undecaprenyl diphosphate + di-trans,octa-cis-undecaprenyl diphosphate + H(+). The enzyme catalyses Preferential cleavage: (Ac)2-L-Lys-D-Ala-|-D-Ala. Also transpeptidation of peptidyl-alanyl moieties that are N-acyl substituents of D-alanine.. It participates in cell wall biogenesis; peptidoglycan biosynthesis. Functionally, cell wall formation. Synthesis of cross-linked peptidoglycan from the lipid intermediates. The enzyme has a penicillin-insensitive transglycosylase N-terminal domain (formation of linear glycan strands) and a penicillin-sensitive transpeptidase C-terminal domain (cross-linking of the peptide subunits). The protein is Penicillin-binding protein 1B (mrcB) of Buchnera aphidicola subsp. Acyrthosiphon pisum (strain APS) (Acyrthosiphon pisum symbiotic bacterium).